A 212-amino-acid chain; its full sequence is Thymidylate kinase (212 aa).

An ATP-binding site is contributed by 10-17; it reads GGEGSGKT.

It belongs to the thymidylate kinase family.

It carries out the reaction dTMP + ATP = dTDP + ADP. Its function is as follows. Phosphorylation of dTMP to form dTDP in both de novo and salvage pathways of dTTP synthesis. The chain is Thymidylate kinase from Marinomonas sp. (strain MWYL1).